The sequence spans 102 residues: Acid shock protein (102 aa).

An N-terminal signal peptide occupies residues 1 to 21 (MKKVLALVVAAAMGLSSAAFA). Low complexity predominate over residues 22 to 41 (AETATTPAPTATTTKAAPAK). Positions 22–58 (AETATTPAPTATTTKAAPAKTTHHKKQHKAAPAQKAQ) are excised as a propeptide. A disordered region spans residues 22–102 (AETATTPAPT…PAKPAAQPAA (81 aa)). A compositionally biased stretch (basic residues) spans 80-90 (AAKKHAGKHGH). A compositionally biased stretch (low complexity) spans 91-102 (QQPAKPAAQPAA).

It belongs to the Asr family. In terms of processing, proteolytic processing gives rise to the active protein.

The protein resides in the periplasm. Required for growth and/or survival at acidic conditions. The sequence is that of Acid shock protein from Shigella flexneri.